We begin with the raw amino-acid sequence, 134 residues long: Small ribosomal subunit protein uS8 (134 aa).

This sequence belongs to the universal ribosomal protein uS8 family. In terms of assembly, part of the 30S ribosomal subunit. Contacts proteins S5 and S12.

In terms of biological role, one of the primary rRNA binding proteins, it binds directly to 16S rRNA central domain where it helps coordinate assembly of the platform of the 30S subunit. This Synechococcus sp. (strain JA-3-3Ab) (Cyanobacteria bacterium Yellowstone A-Prime) protein is Small ribosomal subunit protein uS8.